A 214-amino-acid chain; its full sequence is Putative ankyrin repeat protein RF_1081 (214 aa).

Polar residues predominate over residues 1–14 (MRKQQIPTLSTSAL). A disordered region spans residues 1–32 (MRKQQIPTLSTSALDKSPGPGSPDSDIEMKST). An ANK repeat occupies 67–135 (NPNALLHEAA…EEPILVTKKD (69 aa)).

In Rickettsia felis (strain ATCC VR-1525 / URRWXCal2) (Rickettsia azadi), this protein is Putative ankyrin repeat protein RF_1081.